A 229-amino-acid polypeptide reads, in one-letter code: Cytochrome c oxidase subunit 2 (229 aa).

The Mitochondrial intermembrane segment spans residues 1-26 (MSTWANLGLQDSASPLMEQLIFFHDH). Residues 27–48 (ALLILVMITVLVGYLMFMLFFN) form a helical membrane-spanning segment. At 49 to 62 (SYVNRFLLHGQLIE) the chain is on the mitochondrial matrix side. The chain crosses the membrane as a helical span at residues 63–82 (MIWTILPAIILLFIAMPSLR). The Mitochondrial intermembrane portion of the chain corresponds to 83-229 (LLYLLDEINE…IKWISNSVNS (147 aa)). Cu cation-binding residues include His-161, Cys-196, Glu-198, Cys-200, His-204, and Met-207. Residue Glu-198 coordinates Mg(2+).

This sequence belongs to the cytochrome c oxidase subunit 2 family. In terms of assembly, component of the cytochrome c oxidase (complex IV, CIV), a multisubunit enzyme composed of a catalytic core of 3 subunits and several supernumerary subunits. The complex exists as a monomer or a dimer and forms supercomplexes (SCs) in the inner mitochondrial membrane with ubiquinol-cytochrome c oxidoreductase (cytochrome b-c1 complex, complex III, CIII). Cu cation is required as a cofactor.

The protein resides in the mitochondrion inner membrane. It carries out the reaction 4 Fe(II)-[cytochrome c] + O2 + 8 H(+)(in) = 4 Fe(III)-[cytochrome c] + 2 H2O + 4 H(+)(out). Its function is as follows. Component of the cytochrome c oxidase, the last enzyme in the mitochondrial electron transport chain which drives oxidative phosphorylation. The respiratory chain contains 3 multisubunit complexes succinate dehydrogenase (complex II, CII), ubiquinol-cytochrome c oxidoreductase (cytochrome b-c1 complex, complex III, CIII) and cytochrome c oxidase (complex IV, CIV), that cooperate to transfer electrons derived from NADH and succinate to molecular oxygen, creating an electrochemical gradient over the inner membrane that drives transmembrane transport and the ATP synthase. Cytochrome c oxidase is the component of the respiratory chain that catalyzes the reduction of oxygen to water. Electrons originating from reduced cytochrome c in the intermembrane space (IMS) are transferred via the dinuclear copper A center (CU(A)) of subunit 2 and heme A of subunit 1 to the active site in subunit 1, a binuclear center (BNC) formed by heme A3 and copper B (CU(B)). The BNC reduces molecular oxygen to 2 water molecules using 4 electrons from cytochrome c in the IMS and 4 protons from the mitochondrial matrix. This Drosophila ambigua (Fruit fly) protein is Cytochrome c oxidase subunit 2 (mt:CoII).